We begin with the raw amino-acid sequence, 762 residues long: Lysyl oxidase homolog 2B (762 aa).

Residues Met1–Ala20 form the signal peptide. SRCR domains lie at Leu53–Ser154, Ile183–Ile292, Val316–Asn417, and Leu427–Ser536. Disulfide bonds link Cys79–Cys143, Cys92–Cys153, Cys123–Cys133, Cys213–Cys281, Cys226–Cys291, Cys260–Cys270, Cys341–Cys406, Cys354–Cys416, and Cys385–Cys395. N-linked (GlcNAc...) asparagine glycosylation occurs at Asn278. The N-linked (GlcNAc...) asparagine glycan is linked to Asn447. 3 disulfides stabilise this stretch: Cys456-Cys522, Cys469-Cys535, and Cys503-Cys513. Positions Pro540–Ser742 are lysyl-oxidase like. Ca(2+) contacts are provided by Asp541 and Leu542. 4 cysteine pairs are disulfide-bonded: Cys565–Cys616, Cys571–Cys686, Cys648–Cys664, and Cys654–Cys676. 3 residues coordinate Cu cation: His617, His619, and His621. N-linked (GlcNAc...) asparagine glycosylation occurs at Asn635. The lysine tyrosylquinone (Lys-Tyr) cross-link spans Lys644–Tyr680. Tyr680 carries the post-translational modification 2',4',5'-topaquinone. The Ca(2+) site is built by Glu713, Asp715, Asn718, and Asn719. A disulfide bridge links Cys723 with Cys737.

Belongs to the lysyl oxidase family. Cu cation serves as cofactor. It depends on lysine tyrosylquinone residue as a cofactor. In terms of processing, the lysine tyrosylquinone cross-link (LTQ) is generated by condensation of the epsilon-amino group of a lysine with a topaquinone produced by oxidation of tyrosine.

It localises to the secreted. It is found in the extracellular space. Its subcellular location is the extracellular matrix. The protein resides in the basement membrane. The protein localises to the nucleus. It localises to the chromosome. It is found in the endoplasmic reticulum. The enzyme catalyses L-lysyl-[protein] + O2 + H2O = (S)-2-amino-6-oxohexanoyl-[protein] + H2O2 + NH4(+). Its function is as follows. Mediates the post-translational oxidative deamination of lysine residues on target proteins leading to the formation of deaminated lysine (allysine). Acts as a transcription corepressor and specifically mediates deamination of trimethylated 'Lys-4' of histone H3 (H3K4me3), a specific tag for epigenetic transcriptional activation. Shows no activity against histone H3 when it is trimethylated on 'Lys-9' (H3K9me3) or 'Lys-27' (H3K27me3) or when 'Lys-4' is monomethylated (H3K4me1) or dimethylated (H3K4me2). Also mediates deamination of methylated TAF10, a member of the transcription factor IID (TFIID) complex, which induces release of TAF10 from promoters, leading to inhibition of TFIID-dependent transcription. LOXL2-mediated deamination of TAF10 results in transcriptional repression of genes required for embryonic stem cell pluripotency. Involved in epithelial to mesenchymal transition (EMT) and participates in repression of E-cadherin, probably by mediating deamination of histone H3. When secreted into the extracellular matrix, promotes cross-linking of extracellular matrix proteins by mediating oxidative deamination of peptidyl lysine residues in precursors to fibrous collagen and elastin. Acts as a regulator of sprouting angiogenesis, probably via collagen IV scaffolding. Acts as a regulator of chondrocyte differentiation, probably by regulating expression of factors that control chondrocyte differentiation. Required with loxl2a for correct expression of Sox2 and for neural differentiation. In Danio rerio (Zebrafish), this protein is Lysyl oxidase homolog 2B (loxl2b).